The primary structure comprises 335 residues: Peflin (335 aa).

Positions 23–37 (AMEETRREFEKEKQR) are enriched in basic and acidic residues. The disordered stretch occupies residues 23–92 (AMEETRREFE…SPRHTKTPVD (70 aa)). Residues 43–53 (VTQAQTPNTRV) show a composition bias toward polar residues. EF-hand domains follow at residues 144-192 (KVAP…DDNS), 198-223 (SVDA…IALY), 224-259 (KRVK…LGYL), 260-300 (IPFE…LMRL), and 301-332 (TKLF…LGRF). 3 residues coordinate Ca(2+): Asp-170, Arg-176, and Glu-181. Residues Asp-237, Asn-239, Ser-241, Thr-243, and Glu-248 each coordinate Ca(2+).

In terms of assembly, homodimer.

It localises to the cytoplasm. The protein localises to the nucleus. Its subcellular location is the bud tip. The protein resides in the bud neck. Functionally, calcium-binding protein that is required for polar bud growth and cell wall abscission. Can also bind zinc ions. This Saccharomyces cerevisiae (strain ATCC 204508 / S288c) (Baker's yeast) protein is Peflin (PEF1).